Reading from the N-terminus, the 274-residue chain is MENIKQRIIDAFEQRDQINARTENDDLREAVRYVIDEIDRGELRVAEKVSGEWVVHQWLKKAVLLSFRLNDNDLIEGGETRFWDKVPAKFADYDSARFRAEGMRVVPPAMVRKGAFIGRNVVVMPSYVNIGAHVGEGTMVDTWATVGSCAQIGKNVHLSGGVGIGGVLEPLQANPTIIEDNCFIGARSEIVEGVIVEEGAVISMGVYIGQSTRIYDRENDRILYGRVPSGSVVVPGSLPSANGTHSLYAAIIVKRVDAKTRAKVGINALLRSAE.

Substrate-binding residues include arginine 104 and aspartate 141.

It belongs to the transferase hexapeptide repeat family. As to quaternary structure, homotrimer.

The protein resides in the cytoplasm. It catalyses the reaction (S)-2,3,4,5-tetrahydrodipicolinate + succinyl-CoA + H2O = (S)-2-succinylamino-6-oxoheptanedioate + CoA. The protein operates within amino-acid biosynthesis; L-lysine biosynthesis via DAP pathway; LL-2,6-diaminopimelate from (S)-tetrahydrodipicolinate (succinylase route): step 1/3. In Idiomarina loihiensis (strain ATCC BAA-735 / DSM 15497 / L2-TR), this protein is 2,3,4,5-tetrahydropyridine-2,6-dicarboxylate N-succinyltransferase.